The sequence spans 308 residues: MIDRFGRPLEDLRITLTHACNFECFFCHMEGEEGDNYLLSKEDILLVAKVARKFGINSVKLTGGEPTLRRDLVEIVRGLKQLGYEDVSMTTNGFLLKDLAHKLKLAGLDRINISLHAVSRDTFKKITGVDAFDRVIEGIKSAIDVGLVPVKLNFVVNRRNREEAFKFIELSQNLGVNEIHLIELHPVGLGKLAFKEHDDLREIEEYIEKISIKKLIRKKHFRPRYVLPSGLIVEVVKPYANPIFCAGCNRIRLSVDGKLKTCLYREDNVIDVLDILKGEYSEDVKEELLGRAFMIAIAIREPNFKYKI.

The Radical SAM core domain maps to 4–222; it reads RFGRPLEDLR…KKLIRKKHFR (219 aa). Arg-13 serves as a coordination point for GTP. Residues Cys-20, Cys-24, and Cys-27 each coordinate [4Fe-4S] cluster. Position 60 (Lys-60) interacts with GTP. Residue Gly-64 participates in S-adenosyl-L-methionine binding. Thr-90 provides a ligand contact to GTP. Ser-114 lines the S-adenosyl-L-methionine pocket. Residue Lys-151 coordinates GTP. Cys-245 and Cys-248 together coordinate [4Fe-4S] cluster. GTP is bound at residue 250–252; sequence RIR. Position 262 (Cys-262) interacts with [4Fe-4S] cluster.

The protein belongs to the radical SAM superfamily. MoaA family. It depends on [4Fe-4S] cluster as a cofactor.

The catalysed reaction is GTP + AH2 + S-adenosyl-L-methionine = (8S)-3',8-cyclo-7,8-dihydroguanosine 5'-triphosphate + 5'-deoxyadenosine + L-methionine + A + H(+). The protein operates within cofactor biosynthesis; molybdopterin biosynthesis. Catalyzes the cyclization of GTP to (8S)-3',8-cyclo-7,8-dihydroguanosine 5'-triphosphate. The chain is Probable GTP 3',8-cyclase from Saccharolobus solfataricus (strain ATCC 35092 / DSM 1617 / JCM 11322 / P2) (Sulfolobus solfataricus).